The chain runs to 324 residues: 2,3,4,5-tetrahydropyridine-2,6-dicarboxylate N-succinyltransferase (324 aa).

D173 and E190 together coordinate Mg(2+). E206 serves as the catalytic Acyl-anhydride intermediate. Succinyl-CoA contacts are provided by residues R208, G223, S226, A249, 264-265, G272, K284, and 297-300; these read EA and RRNS.

The protein belongs to the type 2 tetrahydrodipicolinate N-succinyltransferase family. As to quaternary structure, homotrimer.

It localises to the cytoplasm. The catalysed reaction is (S)-2,3,4,5-tetrahydrodipicolinate + succinyl-CoA + H2O = (S)-2-succinylamino-6-oxoheptanedioate + CoA. It functions in the pathway amino-acid biosynthesis; L-lysine biosynthesis via DAP pathway; LL-2,6-diaminopimelate from (S)-tetrahydrodipicolinate (succinylase route): step 1/3. Catalyzes the conversion of the cyclic tetrahydrodipicolinate (THDP) into the acyclic N-succinyl-L-2-amino-6-oxopimelate using succinyl-CoA. In Geodermatophilus obscurus (strain ATCC 25078 / DSM 43160 / JCM 3152 / CCUG 61914 / KCC A-0152 / KCTC 9177 / NBRC 13315 / NRRL B-3577 / G-20), this protein is 2,3,4,5-tetrahydropyridine-2,6-dicarboxylate N-succinyltransferase.